Here is a 309-residue protein sequence, read N- to C-terminus: Glutaminase (309 aa).

Substrate-binding residues include serine 65, asparagine 117, glutamate 162, asparagine 169, tyrosine 193, tyrosine 245, and valine 263.

This sequence belongs to the glutaminase family. Homotetramer.

It catalyses the reaction L-glutamine + H2O = L-glutamate + NH4(+). The sequence is that of Glutaminase from Clostridioides difficile (strain 630) (Peptoclostridium difficile).